We begin with the raw amino-acid sequence, 505 residues long: ATP synthase subunit alpha, chloroplastic (505 aa).

Residue 170–177 (GDRQTGKT) participates in ATP binding.

Belongs to the ATPase alpha/beta chains family. As to quaternary structure, F-type ATPases have 2 components, CF(1) - the catalytic core - and CF(0) - the membrane proton channel. CF(1) has five subunits: alpha(3), beta(3), gamma(1), delta(1), epsilon(1). CF(0) has four main subunits: a, b, b' and c.

The protein localises to the plastid. It localises to the chloroplast thylakoid membrane. It catalyses the reaction ATP + H2O + 4 H(+)(in) = ADP + phosphate + 5 H(+)(out). Functionally, produces ATP from ADP in the presence of a proton gradient across the membrane. The alpha chain is a regulatory subunit. In Oenothera elata subsp. hookeri (Hooker's evening primrose), this protein is ATP synthase subunit alpha, chloroplastic.